Here is a 453-residue protein sequence, read N- to C-terminus: Carbamoyl phosphate synthase arginine-specific small chain (453 aa).

A mitochondrion-targeting transit peptide spans 1-28 (MFARVFKAMPARAPAFTSVNASIQSRFM). Residues 219–406 (HVAVIDCGVK…LDSVVKYKNH (188 aa)) form the Glutamine amidotransferase type-1 domain. The active-site Nucleophile is Cys-295. Residues His-379 and Glu-381 contribute to the active site.

The protein belongs to the CarA family. As to quaternary structure, heterodimer composed of 2 chains; the small (or glutamine) chain promotes the hydrolysis of glutamine to ammonia, which is used by the large (or ammonia) chain to synthesize carbamoyl phosphate.

It localises to the mitochondrion matrix. It carries out the reaction hydrogencarbonate + L-glutamine + 2 ATP + H2O = carbamoyl phosphate + L-glutamate + 2 ADP + phosphate + 2 H(+). The catalysed reaction is L-glutamine + H2O = L-glutamate + NH4(+). Its pathway is amino-acid biosynthesis; L-arginine biosynthesis; carbamoyl phosphate from bicarbonate: step 1/1. Small subunit of the arginine-specific carbamoyl phosphate synthase (CPSase). CPSase catalyzes the formation of carbamoyl phosphate from the ammonia moiety of glutamine, carbonate, and phosphate donated by ATP, the first step of the arginine biosynthetic pathway. The small subunit (glutamine amidotransferase) binds and cleaves glutamine to supply the large subunit with the substrate ammonia. The chain is Carbamoyl phosphate synthase arginine-specific small chain (cpa1) from Aspergillus niger (strain ATCC MYA-4892 / CBS 513.88 / FGSC A1513).